A 351-amino-acid chain; its full sequence is Amylovoran biosynthesis glycosyltransferase AmsD (351 aa).

This sequence belongs to the glycosyltransferase group 1 family. Glycosyltransferase 4 subfamily.

It participates in glycan metabolism; exopolysaccharide biosynthesis. Its function is as follows. Involved in the biosynthesis of amylovoran which functions as a virulence factor. May be involved in the formation of galactose alpha-1,6 linkages in amylovoran. The chain is Amylovoran biosynthesis glycosyltransferase AmsD (amsD) from Erwinia amylovora (Fire blight bacteria).